Consider the following 71-residue polypeptide: Small ribosomal subunit protein bS21 (71 aa).

The protein belongs to the bacterial ribosomal protein bS21 family.

The polypeptide is Small ribosomal subunit protein bS21 (Marinobacter nauticus (strain ATCC 700491 / DSM 11845 / VT8) (Marinobacter aquaeolei)).